The following is a 55-amino-acid chain: Large ribosomal subunit protein bL33 (55 aa).

The protein belongs to the bacterial ribosomal protein bL33 family.

The polypeptide is Large ribosomal subunit protein bL33 (Methylobacterium radiotolerans (strain ATCC 27329 / DSM 1819 / JCM 2831 / NBRC 15690 / NCIMB 10815 / 0-1)).